The chain runs to 156 residues: 6,7-dimethyl-8-ribityllumazine synthase (156 aa).

5-amino-6-(D-ribitylamino)uracil contacts are provided by residues Phe23, 57-59, and 81-83; these read AFE and AVI. 86–87 provides a ligand contact to (2S)-2-hydroxy-3-oxobutyl phosphate; the sequence is ST. His89 (proton donor) is an active-site residue. Residue Phe114 coordinates 5-amino-6-(D-ribitylamino)uracil. Arg128 lines the (2S)-2-hydroxy-3-oxobutyl phosphate pocket.

Belongs to the DMRL synthase family.

It carries out the reaction (2S)-2-hydroxy-3-oxobutyl phosphate + 5-amino-6-(D-ribitylamino)uracil = 6,7-dimethyl-8-(1-D-ribityl)lumazine + phosphate + 2 H2O + H(+). It functions in the pathway cofactor biosynthesis; riboflavin biosynthesis; riboflavin from 2-hydroxy-3-oxobutyl phosphate and 5-amino-6-(D-ribitylamino)uracil: step 1/2. Its function is as follows. Catalyzes the formation of 6,7-dimethyl-8-ribityllumazine by condensation of 5-amino-6-(D-ribitylamino)uracil with 3,4-dihydroxy-2-butanone 4-phosphate. This is the penultimate step in the biosynthesis of riboflavin. In Campylobacter lari (strain RM2100 / D67 / ATCC BAA-1060), this protein is 6,7-dimethyl-8-ribityllumazine synthase.